A 558-amino-acid chain; its full sequence is uncharacterized protein (558 aa).

The tract at residues Asn531–Arg558 is disordered.

This is an uncharacterized protein from Saccharomyces cerevisiae (strain ATCC 204508 / S288c) (Baker's yeast).